Consider the following 162-residue polypeptide: General odorant-binding protein 2 (162 aa).

The first 18 residues, 1–18 (MTSKSCLLLVAMVTLTTS), serve as a signal peptide directing secretion. 3 disulfide bridges follow: C40–C75, C71–C129, and C118–C138.

It belongs to the PBP/GOBP family. Antenna.

Its function is as follows. Present in the aqueous fluid surrounding olfactory sensory dendrites and are thought to aid in the capture and transport of hydrophobic odorants into and through this fluid. The protein is General odorant-binding protein 2 of Heliothis virescens (Tobacco budworm moth).